The following is a 255-amino-acid chain: Putative oxidoreductase YtkK (255 aa).

NAD(+) is bound at residue Thr7 to Gly14.

It belongs to the short-chain dehydrogenases/reductases (SDR) family.

This is Putative oxidoreductase YtkK (ytkK) from Bacillus subtilis (strain 168).